The chain runs to 444 residues: uncharacterized protein (444 aa).

Helical transmembrane passes span 2-22 (PILIVAVGVLILLFLIIKVKL), 24-44 (TFVSLIVVSFLVAIGLGMDIN), 52-72 (TGIGGQLGHLALVFGLGAMLG), 106-126 (FIIGIALFFEVGLVLLIPIVY), 134-154 (MPFLYLGIPMAAALNVTHGFL), 174-194 (VLLFGIIIAVPTTVIAGPLFN), 228-248 (FAISAVTSLFPVIFMAMATIF), 261-281 (IIEFIGTPGTAMLISLLLALY), 305-325 (IAMMLLIIGGGGAFKQVLIDG), 343-363 (LFVAWTIAAVLRLCLGSATVA), 377-397 (AGSVNPALMVLATGAGSVIAC), and 424-444 (LLTTVLSVTGLGCVLLAGLVM).

Belongs to the GntP permease family.

It localises to the cell membrane. This is an uncharacterized protein from Bacillus subtilis (strain 168).